We begin with the raw amino-acid sequence, 434 residues long: Glutamyl-tRNA reductase (434 aa).

Residues 52 to 55 (TCNR), Ser115, 120 to 122 (ETQ), and Gln126 contribute to the substrate site. Catalysis depends on Cys53, which acts as the Nucleophile. Position 195-200 (195-200 (GAGEMI)) interacts with NADP(+).

This sequence belongs to the glutamyl-tRNA reductase family. Homodimer.

The catalysed reaction is (S)-4-amino-5-oxopentanoate + tRNA(Glu) + NADP(+) = L-glutamyl-tRNA(Glu) + NADPH + H(+). The protein operates within porphyrin-containing compound metabolism; protoporphyrin-IX biosynthesis; 5-aminolevulinate from L-glutamyl-tRNA(Glu): step 1/2. In terms of biological role, catalyzes the NADPH-dependent reduction of glutamyl-tRNA(Glu) to glutamate 1-semialdehyde (GSA). The sequence is that of Glutamyl-tRNA reductase from Cupriavidus necator (strain ATCC 17699 / DSM 428 / KCTC 22496 / NCIMB 10442 / H16 / Stanier 337) (Ralstonia eutropha).